Consider the following 611-residue polypeptide: Inhibitor of apoptosis protein (611 aa).

3 BIR repeats span residues 30–97 (ELYR…CSFV), 176–242 (EEAR…CPFV), and 262–329 (HEAR…CEYL). Positions 299, 302, 319, and 326 each coordinate Zn(2+). The CARD domain maps to 446–536 (VASDDLSLIR…VLYKDLFVEK (91 aa)). The RING-type zinc finger occupies 564 to 599 (CKVCMDKEVSIVFIPCGHLVVCKECAPSLRKCPICR).

This sequence belongs to the IAP family. In terms of tissue distribution, cells of the T-lymphocyte lineage. Found in both cortical and medullary cells of the thymus. Expressed at relatively high levels also in spleen, bursa, intestine and lung and at very low levels in testis, brain and skeletal muscle.

It localises to the nucleus. The protein resides in the cytoplasm. Functionally, apoptotic suppressor. This is Inhibitor of apoptosis protein (ITA) from Gallus gallus (Chicken).